We begin with the raw amino-acid sequence, 716 residues long: Polyribonucleotide nucleotidyltransferase (716 aa).

2 residues coordinate Mg(2+): D485 and D491. Positions 552 to 611 (PKITTISVPKEKIRDVIGSGGKVIREIVEYSGAKVDIGDDGTVTIAASNDEQAQKAIARI) constitute a KH domain. The 69-residue stretch at 621–689 (GRIYEGKVVK…DRGKVKLSMR (69 aa)) folds into the S1 motif domain.

This sequence belongs to the polyribonucleotide nucleotidyltransferase family. Requires Mg(2+) as cofactor.

It is found in the cytoplasm. The enzyme catalyses RNA(n+1) + phosphate = RNA(n) + a ribonucleoside 5'-diphosphate. Functionally, involved in mRNA degradation. Catalyzes the phosphorolysis of single-stranded polyribonucleotides processively in the 3'- to 5'-direction. This chain is Polyribonucleotide nucleotidyltransferase, found in Gluconobacter oxydans (strain 621H) (Gluconobacter suboxydans).